The sequence spans 652 residues: MQWHRLRFPIKLTFAIVLSLLIGFHFNLETPRWAVMTACIVAGGTAFAAGGDPFSGALRHRGMLRIIGTFLGCIAALTIMIATIRAPALMMLLCCMWAGLCVWLSSLIKIENSYALGLAGYTALIIVVSVDANGSVLLAPQFAVERCSEIIIGIVCAILADMLFSPRSVKQDIDREIDALLVDQYKLMQLCVAHGDKEEVDRLWTNLVRRTTALNGMRGNLMMESSRWQKIDERMRALNTLSLALITQAAETYLIQDSRKEYVPPQFHIFFDKSVENIGDIHKRMKIMRRVITTSGSKNTPVTLQNWVVAATRYLLLLKGIHTNSSISRIEREVLKDEPVVKMRSAESRHAMINGIRTFVATAVGSLFWLWTGWASGSGAMVMLAVITALAMRMPNPLMMAKDFLYGMIVAIPLGSLYYMVIMPSTQQSMLLLCISLGVMAFIGGILIQRRQIGTLGGLVGTINIITLDNPMTFNVTAFLDNALGQAIGCFLALLVILLIRDTSKARTGRILLNRFMYAAVAAMSTNQARRRENHLPALYHQLFMLLNIFPGDIDKFRIALTLIIGHQRLRDADIPVNEDLSAYHKQLRHTADQVIAARTDAKRHRYFEQLLAELDTYQGKLVHYDAPLNVTEPVKRLANTLKKYQNTLIQI.

A run of 11 helical transmembrane segments spans residues 8-28 (FPIKLTFAIVLSLLIGFHFNL), 34-54 (AVMTACIVAGGTAFAAGGDPF), 64-84 (LRIIGTFLGCIAALTIMIATI), 88-108 (ALMMLLCCMWAGLCVWLSSLI), 118-138 (LAGYTALIIVVSVDANGSVLL), 149-169 (EIIIGIVCAILADMLFSPRSV), 367-387 (LFWLWTGWASGSGAMVMLAVI), 404-424 (FLYGMIVAIPLGSLYYMVIMP), 429-449 (SMLLLCISLGVMAFIGGILIQ), 453-473 (IGTLGGLVGTINIITLDNPMT), and 480-500 (LDNALGQAIGCFLALLVILLI).

It belongs to the aromatic acid exporter ArAE (TC 2.A.85) family.

Its subcellular location is the cell inner membrane. In terms of biological role, forms an efflux pump with AaeA. Could function as a metabolic relief valve, allowing to eliminate certain compounds when they accumulate to high levels in the cell. This Erwinia billingiae (strain Eb661) protein is p-hydroxybenzoic acid efflux pump subunit AaeB.